Reading from the N-terminus, the 260-residue chain is Phosphatidate cytidylyltransferase (260 aa).

Helical transmembrane passes span 9–29 (IIALLIFLPILLKGGLILMLF), 46–66 (MIKFLSIPGLISALALIIIML), 70–90 (AGEWVQVIQLKGLIAMSFIVL), 102–122 (FMDAAFCLMSVAYVGIGFMYF), 130–150 (LRYILFAFLIVWLTDTGAYIF), 172–192 (FFGGILCSILVPLVMQMFVDL), and 196–216 (IWLLLLVTIVLSMFGQLGDLV).

This sequence belongs to the CDS family.

It localises to the cell membrane. It carries out the reaction a 1,2-diacyl-sn-glycero-3-phosphate + CTP + H(+) = a CDP-1,2-diacyl-sn-glycerol + diphosphate. The protein operates within phospholipid metabolism; CDP-diacylglycerol biosynthesis; CDP-diacylglycerol from sn-glycerol 3-phosphate: step 3/3. The polypeptide is Phosphatidate cytidylyltransferase (cdsA) (Staphylococcus epidermidis (strain ATCC 35984 / DSM 28319 / BCRC 17069 / CCUG 31568 / BM 3577 / RP62A)).